The chain runs to 200 residues: Small ribosomal subunit protein uS4 (200 aa).

Residues 22–41 (TGKELQKRPYAPGQHGPNQR) are disordered. In terms of domain architecture, S4 RNA-binding spans 92–152 (SRLDNLVYRM…EKSRNLQVIK (61 aa)).

It belongs to the universal ribosomal protein uS4 family. As to quaternary structure, part of the 30S ribosomal subunit. Contacts protein S5. The interaction surface between S4 and S5 is involved in control of translational fidelity.

In terms of biological role, one of the primary rRNA binding proteins, it binds directly to 16S rRNA where it nucleates assembly of the body of the 30S subunit. Functionally, with S5 and S12 plays an important role in translational accuracy. The chain is Small ribosomal subunit protein uS4 from Halalkalibacterium halodurans (strain ATCC BAA-125 / DSM 18197 / FERM 7344 / JCM 9153 / C-125) (Bacillus halodurans).